We begin with the raw amino-acid sequence, 383 residues long: uncharacterized protein (383 aa).

Belongs to the peptidase M20 family.

This is an uncharacterized protein from Staphylococcus aureus (strain USA300).